The chain runs to 70 residues: Large ribosomal subunit protein bL31 (70 aa).

K8 bears the N6-acetyllysine mark. 4 residues coordinate Zn(2+): C16, C18, C37, and C40.

It belongs to the bacterial ribosomal protein bL31 family. Type A subfamily. As to quaternary structure, part of the 50S ribosomal subunit. The cofactor is Zn(2+).

Binds the 23S rRNA. This Shigella flexneri protein is Large ribosomal subunit protein bL31.